Consider the following 478-residue polypeptide: ATP-dependent RNA helicase DDX19A (478 aa).

An N-acetylalanine modification is found at A2. The interval 2–299 (ATDSWALAVD…DPNIIKLKRE (298 aa)) is N-terminal lobe. K26 is covalently cross-linked (Glycyl lysine isopeptide (Lys-Gly) (interchain with G-Cter in SUMO1); alternate). Residue K26 forms a Glycyl lysine isopeptide (Lys-Gly) (interchain with G-Cter in SUMO2); alternate linkage. Residues 34 to 53 (TNGVIKTSTTAEKTEEEEKE) form a disordered region. T42 carries the phosphothreonine modification. The tract at residues 54 to 67 (DRAAQSLLNKLIRS) is N-terminal helix. Positions 91 to 119 (KSFEELRLKPQLLQGVYAMGFNRPSKIQE) match the Q motif motif. ATP-binding positions include Q118 and 137–144 (SQSGTGKT). In terms of domain architecture, Helicase ATP-binding spans 124-294 (MMLAEPPQNL…QKVVPDPNII (171 aa)). The DEAD box signature appears at 241–244 (DEAD). Residues 300 to 478 (EETLDTIKQY…DLDEIEKIAN (179 aa)) are C-terminal lobe. The Helicase C-terminal domain occupies 305 to 473 (TIKQYYVLCN…RLDTDDLDEI (169 aa)). 2 residues coordinate ATP: R428 and R431.

Belongs to the DEAD box helicase family. DDX19/DBP5 subfamily. In terms of tissue distribution, found in testis, heart, brain, liver, skeletal muscle, and kidney.

The protein localises to the cytoplasm. Its subcellular location is the nucleus. It localises to the nucleoplasm. It carries out the reaction ATP + H2O = ADP + phosphate + H(+). In terms of biological role, ATP-dependent RNA helicase involved in mRNA export from the nucleus. Rather than unwinding RNA duplexes, DDX19 functions as a remodeler of ribonucleoprotein particles, whereby proteins bound to nuclear mRNA are dissociated and replaced by cytoplasmic mRNA binding proteins. The protein is ATP-dependent RNA helicase DDX19A (Ddx19a) of Mus musculus (Mouse).